Here is a 301-residue protein sequence, read N- to C-terminus: Bifunctional dTDP-4-dehydrorhamnose 3,5-epimerase/dTDP-4-dehydrorhamnose reductase (301 aa).

NADPH-binding positions include tryptophan 23 to isoleucine 24, glycine 69 to threonine 71, and tyrosine 111.

This sequence belongs to the dTDP-4-dehydrorhamnose reductase family. Expressed in roots, leaves, stems and flowers.

It carries out the reaction dTDP-4-dehydro-6-deoxy-alpha-D-glucose = dTDP-4-dehydro-beta-L-rhamnose. It catalyses the reaction dTDP-beta-L-rhamnose + NADP(+) = dTDP-4-dehydro-beta-L-rhamnose + NADPH + H(+). Its pathway is carbohydrate biosynthesis; dTDP-L-rhamnose biosynthesis. Its function is as follows. Bifunctional enzyme involved in dTDP-beta-L-rhamnose biosynthesis. Catalyzes the epimerization of the C3' and C5'positions of dTDP-6-deoxy-4-keto-alpha-D-glucose to form dTDP-4-keto-beta-L-rhamnose and its reduction to yield dTDP-beta-L-rhamnose. Can form UDP-beta-L-rhamnose from UDP-6-deoxy-4-keto-alpha-D-glucose, but cannot convert GDP-4-dehydro-6-deoxy-D-mannose to GDP-fucose. The protein is Bifunctional dTDP-4-dehydrorhamnose 3,5-epimerase/dTDP-4-dehydrorhamnose reductase of Arabidopsis thaliana (Mouse-ear cress).